The sequence spans 400 residues: Endoglucanase A (400 aa).

The N-terminal stretch at 1–32 is a signal peptide; it reads MTKTFKKFSIAGLALLFMATAAFAGWSTKASA. Catalysis depends on Glu187, which acts as the Proton donor. Glu328 (nucleophile) is an active-site residue.

Belongs to the glycosyl hydrolase 5 (cellulase A) family.

The protein localises to the secreted. The catalysed reaction is Endohydrolysis of (1-&gt;4)-beta-D-glucosidic linkages in cellulose, lichenin and cereal beta-D-glucans.. Its activity is regulated as follows. Strongly inhibited by Hg(2+), Ag(+) and Fe(3+). To a lesser extent, is also inhibited by Pb(2+), Mn(2+), Sn(2+) and Cu(2+). By contrast, Ni(2+), Zn(2+), Co(2+), Ba(2+) and NH(4)(+) do not affect enzyme activity, while 10 mM Ca(2+), and Mg(2+) produce a stimulating effect. Is also strongly inhibited by chemicals such as N-bromosuccinimide and dimethyl(2-dihydroxy-5-nitrobenzyl)sulphonium bromide. Is not affected by N-acetylimidazole. Its function is as follows. Endoglucanase with high activity on carboxymethylcellulose (CMC) and lichenan, but not active on Avicel. The chain is Endoglucanase A (celA) from Paenibacillus barcinonensis.